The sequence spans 269 residues: Holocytochrome-c synthase (269 aa).

A disordered region spans residues 1–72; it reads MGWFWADQKT…ASKQPGQKMD (72 aa). HRM repeat units lie at residues 25-30 and 41-46; these read GCPVMH and ECPVMQ.

It belongs to the cytochrome c-type heme lyase family.

The protein resides in the mitochondrion inner membrane. The protein localises to the mitochondrion intermembrane space. It catalyses the reaction holo-[cytochrome c] = apo-[cytochrome c] + heme b. Its function is as follows. Lyase that catalyzes the covalent linking of the heme group to the cytochrome C apoprotein to produce the mature functional cytochrome. The sequence is that of Holocytochrome-c synthase (CYC3) from Saccharomyces cerevisiae (strain ATCC 204508 / S288c) (Baker's yeast).